A 288-amino-acid chain; its full sequence is Elongation factor Ts (288 aa).

The interval 82–85 (TDFV) is involved in Mg(2+) ion dislocation from EF-Tu.

Belongs to the EF-Ts family.

The protein localises to the cytoplasm. Functionally, associates with the EF-Tu.GDP complex and induces the exchange of GDP to GTP. It remains bound to the aminoacyl-tRNA.EF-Tu.GTP complex up to the GTP hydrolysis stage on the ribosome. In Pelodictyon phaeoclathratiforme (strain DSM 5477 / BU-1), this protein is Elongation factor Ts.